The following is a 452-amino-acid chain: Cytoplasmic tRNA 2-thiolation protein 2 (452 aa).

It belongs to the CTU2/NCS2 family.

It localises to the cytoplasm. The protein operates within tRNA modification; 5-methoxycarbonylmethyl-2-thiouridine-tRNA biosynthesis. Its function is as follows. Plays a central role in 2-thiolation of mcm(5)S(2)U at tRNA wobble positions of tRNA(Lys), tRNA(Glu) and tRNA(Gln). May act by forming a heterodimer with NCS6 that ligates sulfur from thiocarboxylated URM1 onto the uridine of tRNAs at wobble position. Prior mcm(5) tRNA modification by the elongator complex is required for 2-thiolation. May also be involved in protein urmylation. The protein is Cytoplasmic tRNA 2-thiolation protein 2 of Candida albicans (strain SC5314 / ATCC MYA-2876) (Yeast).